Here is a 491-residue protein sequence, read N- to C-terminus: Argininosuccinate lyase (491 aa).

This sequence belongs to the lyase 1 family. Argininosuccinate lyase subfamily.

The protein localises to the cytoplasm. The catalysed reaction is 2-(N(omega)-L-arginino)succinate = fumarate + L-arginine. Its pathway is amino-acid biosynthesis; L-arginine biosynthesis; L-arginine from L-ornithine and carbamoyl phosphate: step 3/3. The polypeptide is Argininosuccinate lyase (Methanosarcina barkeri (strain Fusaro / DSM 804)).